We begin with the raw amino-acid sequence, 244 residues long: MRILVTNDDGIYSPGLWALAEAASQFGEVFVAAPDTEQSATGHAITIAHPVRAYPHPAPLHGPHFPAYQVRGTPADCVALGLHLFGPVDLVLSGVNLGSNLGHEIWHSGTVAAAKQGYLFGLSAAAFSVPLNGEVPDFAGLRPWLLRTLETLLRLERPFLVNVNLPLRPKGFLWTRQSVRAYEGVVIPGEDPMGRPFYWFASRPLKEAEEGTDRWAVAQGFVSATPLRLDLTDETRLQPALAQE.

Residues aspartate 8, aspartate 9, serine 39, and asparagine 96 each contribute to the a divalent metal cation site.

This sequence belongs to the SurE nucleotidase family. Requires a divalent metal cation as cofactor.

It is found in the cytoplasm. The catalysed reaction is a ribonucleoside 5'-phosphate + H2O = a ribonucleoside + phosphate. Its function is as follows. Nucleotidase that shows phosphatase activity on nucleoside 5'-monophosphates. In Thermus thermophilus (strain ATCC BAA-163 / DSM 7039 / HB27), this protein is 5'-nucleotidase SurE 2.